Reading from the N-terminus, the 168-residue chain is Lipoprotein signal peptidase (168 aa).

The next 3 helical transmembrane spans lie at 8–28, 70–90, and 104–124; these read TLLV…VVLL, KYFL…YLFF, and VLLC…GHIV. Active-site residues include aspartate 125 and aspartate 143. The chain crosses the membrane as a helical span at residues 134-154; that stretch reads WAFPTFNVADVLISLGTLLLV.

It belongs to the peptidase A8 family.

The protein localises to the cell inner membrane. It carries out the reaction Release of signal peptides from bacterial membrane prolipoproteins. Hydrolyzes -Xaa-Yaa-Zaa-|-(S,diacylglyceryl)Cys-, in which Xaa is hydrophobic (preferably Leu), and Yaa (Ala or Ser) and Zaa (Gly or Ala) have small, neutral side chains.. It participates in protein modification; lipoprotein biosynthesis (signal peptide cleavage). Its function is as follows. This protein specifically catalyzes the removal of signal peptides from prolipoproteins. This Chlamydia pneumoniae (Chlamydophila pneumoniae) protein is Lipoprotein signal peptidase.